We begin with the raw amino-acid sequence, 189 residues long: Probable nicotinate-nucleotide adenylyltransferase (189 aa).

It belongs to the NadD family.

The catalysed reaction is nicotinate beta-D-ribonucleotide + ATP + H(+) = deamido-NAD(+) + diphosphate. The protein operates within cofactor biosynthesis; NAD(+) biosynthesis; deamido-NAD(+) from nicotinate D-ribonucleotide: step 1/1. Functionally, catalyzes the reversible adenylation of nicotinate mononucleotide (NaMN) to nicotinic acid adenine dinucleotide (NaAD). This chain is Probable nicotinate-nucleotide adenylyltransferase, found in Bacillus licheniformis (strain ATCC 14580 / DSM 13 / JCM 2505 / CCUG 7422 / NBRC 12200 / NCIMB 9375 / NCTC 10341 / NRRL NRS-1264 / Gibson 46).